The sequence spans 170 residues: Transcription factor E (170 aa).

One can recognise an HTH TFE/IIEalpha-type domain in the interval 1–93 (MKEAYLYIVE…TWYVDDEIIR (93 aa)).

It belongs to the TFE family. In terms of assembly, monomer. Interaction with RNA polymerase subunits RpoF and RpoE is necessary for Tfe stimulatory transcription activity. Able to interact with Tbp and RNA polymerase in the absence of DNA promoter. Interacts both with the preinitiation and elongation complexes.

Its function is as follows. Transcription factor that plays a role in the activation of archaeal genes transcribed by RNA polymerase. Facilitates transcription initiation by enhancing TATA-box recognition by TATA-box-binding protein (Tbp), and transcription factor B (Tfb) and RNA polymerase recruitment. Not absolutely required for transcription in vitro, but particularly important in cases where Tbp or Tfb function is not optimal. It dynamically alters the nucleic acid-binding properties of RNA polymerases by stabilizing the initiation complex and destabilizing elongation complexes. Seems to translocate with the RNA polymerase following initiation and acts by binding to the non template strand of the transcription bubble in elongation complexes. The polypeptide is Transcription factor E (Pyrobaculum islandicum (strain DSM 4184 / JCM 9189 / GEO3)).